Consider the following 498-residue polypeptide: ATP synthase subunit beta, chloroplastic (498 aa).

172-179 (GGAGVGKT) contacts ATP.

Belongs to the ATPase alpha/beta chains family. As to quaternary structure, F-type ATPases have 2 components, CF(1) - the catalytic core - and CF(0) - the membrane proton channel. CF(1) has five subunits: alpha(3), beta(3), gamma(1), delta(1), epsilon(1). CF(0) has four main subunits: a(1), b(1), b'(1) and c(9-12).

The protein resides in the plastid. It localises to the chloroplast thylakoid membrane. The enzyme catalyses ATP + H2O + 4 H(+)(in) = ADP + phosphate + 5 H(+)(out). In terms of biological role, produces ATP from ADP in the presence of a proton gradient across the membrane. The catalytic sites are hosted primarily by the beta subunits. In Trochodendron aralioides (Wheel tree), this protein is ATP synthase subunit beta, chloroplastic.